The primary structure comprises 21 residues: Dahlein-5.5 (21 aa).

In terms of tissue distribution, expressed by the skin dorsal glands.

It localises to the secreted. Its function is as follows. Has no antimicrobial activity. Strongly inhibits the formation of NO by neuronal nitric oxide synthase at micromolar concentrations. This Ranoidea dahlii (Dahl's aquatic frog) protein is Dahlein-5.5.